Consider the following 429-residue polypeptide: Transcription factor IIIA (429 aa).

A disordered region spans residues 1-45; that stretch reads MGGEVLNNEGMPLAELKQETIPISRSESSESLNSLTSTRSSSSNR. A compositionally biased stretch (low complexity) spans 24 to 44; the sequence is SRSESSESLNSLTSTRSSSSN. 9 consecutive C2H2-type zinc fingers follow at residues 49-74, 80-102, 108-130, 134-159, 163-186, 194-219, 222-244, 253-277, and 365-389; these read YFCD…LSVH, FQCD…LYTH, FQCS…EVTH, FICP…LSVH, LTCP…SKHH, YQCT…KNDH, LKCP…MIIH, WKCH…GSIH, and YRCF…IDKH. A compositionally biased stretch (basic and acidic residues) spans 406 to 416; it reads KTLVDQNHKEP. Residues 406–429 are disordered; that stretch reads KTLVDQNHKEPFIIQKETQSAGDK.

It localises to the nucleus. Functionally, interacts with the internal control region (ICR) of approximately 50 bases within the 5S RNA genes, is required for correct transcription of these genes by RNA polymerase III. Also binds the transcribed 5S RNA's. The polypeptide is Transcription factor IIIA (PZF1) (Saccharomyces cerevisiae (strain ATCC 204508 / S288c) (Baker's yeast)).